Reading from the N-terminus, the 308-residue chain is CD276 antigen homolog (308 aa).

A signal peptide spans 1–15 (MAALCLLLLLSLAEA). Over 16 to 236 (IDLRVPELPV…VTGQHLSFPP (221 aa)) the chain is Extracellular. The region spanning 21 to 125 (PELPVIGLLD…VQNSSSASVS (105 aa)) is the Ig-like V-type domain. Cystine bridges form between Cys-37/Cys-112 and Cys-155/Cys-210. Residues 135 to 228 (PTLHLEPSEA…DVTHASLTVT (94 aa)) form the Ig-like C2-type domain. The helical transmembrane segment at 237–257 (LVLWVTVGLSICLLCLLVALA) threads the bilayer. The Cytoplasmic segment spans residues 258–308 (CVCRKHLKQTCEEEQENAGNEEHEENGELKTAMQPLKVTSPGEDDDAECLE). Residues 270–308 (EEQENAGNEEHEENGELKTAMQPLKVTSPGEDDDAECLE) form a disordered region. Residues 299–308 (GEDDDAECLE) are compositionally biased toward acidic residues.

This sequence belongs to the immunoglobulin superfamily. BTN/MOG family.

The protein localises to the membrane. In terms of biological role, modulates immune responses. The sequence is that of CD276 antigen homolog (cd276) from Xenopus laevis (African clawed frog).